The primary structure comprises 205 residues: Probable peptidyl-tRNA hydrolase 2 (205 aa).

The span at 40-49 (YSSKNANKAS) shows a compositional bias: polar residues. Residues 40–68 (YSSKNANKASNPEKESPVSVSNDEDSESE) are disordered. Residues serine 65 and serine 79 each carry the phosphoserine modification.

Belongs to the PTH2 family.

The catalysed reaction is an N-acyl-L-alpha-aminoacyl-tRNA + H2O = an N-acyl-L-amino acid + a tRNA + H(+). In terms of biological role, the natural substrate for this enzyme may be peptidyl-tRNAs which drop off the ribosome during protein synthesis. This chain is Probable peptidyl-tRNA hydrolase 2, found in Schizosaccharomyces pombe (strain 972 / ATCC 24843) (Fission yeast).